We begin with the raw amino-acid sequence, 157 residues long: Ribosome maturation factor RimP (157 aa).

The protein belongs to the RimP family.

Its subcellular location is the cytoplasm. In terms of biological role, required for maturation of 30S ribosomal subunits. The chain is Ribosome maturation factor RimP from Limosilactobacillus reuteri (strain DSM 20016) (Lactobacillus reuteri).